A 344-amino-acid chain; its full sequence is L-rhamnose-proton symporter (344 aa).

10 helical membrane-spanning segments follow: residues 4-24 (AITMGIFWHLIGAASAACFYA), 38-58 (WSVGGIVSWLILPWAISATLL), 68-88 (FSASTLLPVFLFGAMWGIGNI), 101-121 (MGIGIAIGITLIVGTLMTPII), 131-151 (TQGGQMTLLGVLVAVIGVGIV), 175-195 (LLLAVMCGIFSAGMSFAMNAA), 214-234 (LPSYVVIMGGGALVNLGFCFI), 259-279 (LLLSALGGLMWYLQFFFYAWG), 290-310 (MSWMLHMSFYVLCGGVVGLVL), and 323-343 (VLSLGCVVIIIAANIVGLGMA).

Belongs to the L-rhamnose transporter (TC 2.A.7.6) family.

The protein localises to the cell inner membrane. It catalyses the reaction L-rhamnopyranose(in) + H(+)(in) = L-rhamnopyranose(out) + H(+)(out). Uptake of L-rhamnose across the cytoplasmic membrane with the concomitant transport of protons into the cell (symport system). In Klebsiella pneumoniae subsp. pneumoniae (strain ATCC 700721 / MGH 78578), this protein is L-rhamnose-proton symporter.